Consider the following 317-residue polypeptide: Lipoyl synthase (317 aa).

The interval 1 to 21 is disordered; the sequence is MVTVIDTLARPRHPEKANRPE. The segment covering 12-21 has biased composition (basic and acidic residues); sequence RHPEKANRPE. [4Fe-4S] cluster-binding residues include cysteine 57, cysteine 62, cysteine 68, cysteine 83, cysteine 87, cysteine 90, and serine 296. A Radical SAM core domain is found at 69-285; that stretch reads WEKKHATFMI…ETVAYAKGFL (217 aa).

It belongs to the radical SAM superfamily. Lipoyl synthase family. It depends on [4Fe-4S] cluster as a cofactor.

The protein localises to the cytoplasm. It carries out the reaction [[Fe-S] cluster scaffold protein carrying a second [4Fe-4S](2+) cluster] + N(6)-octanoyl-L-lysyl-[protein] + 2 oxidized [2Fe-2S]-[ferredoxin] + 2 S-adenosyl-L-methionine + 4 H(+) = [[Fe-S] cluster scaffold protein] + N(6)-[(R)-dihydrolipoyl]-L-lysyl-[protein] + 4 Fe(3+) + 2 hydrogen sulfide + 2 5'-deoxyadenosine + 2 L-methionine + 2 reduced [2Fe-2S]-[ferredoxin]. It functions in the pathway protein modification; protein lipoylation via endogenous pathway; protein N(6)-(lipoyl)lysine from octanoyl-[acyl-carrier-protein]: step 2/2. Catalyzes the radical-mediated insertion of two sulfur atoms into the C-6 and C-8 positions of the octanoyl moiety bound to the lipoyl domains of lipoate-dependent enzymes, thereby converting the octanoylated domains into lipoylated derivatives. The polypeptide is Lipoyl synthase (Xanthobacter autotrophicus (strain ATCC BAA-1158 / Py2)).